The following is a 246-amino-acid chain: tRNA (guanine-N(1)-)-methyltransferase (246 aa).

Residues G114 and 133-138 each bind S-adenosyl-L-methionine; that span reads LGDYVL.

It belongs to the RNA methyltransferase TrmD family. Homodimer.

It localises to the cytoplasm. The catalysed reaction is guanosine(37) in tRNA + S-adenosyl-L-methionine = N(1)-methylguanosine(37) in tRNA + S-adenosyl-L-homocysteine + H(+). Specifically methylates guanosine-37 in various tRNAs. The polypeptide is tRNA (guanine-N(1)-)-methyltransferase (Enterococcus faecalis (strain ATCC 700802 / V583)).